The chain runs to 408 residues: Serine/threonine transporter SstT (408 aa).

9 consecutive transmembrane segments (helical) span residues 11-31 (LANGSLVLQILVGIIAGVALA), 43-63 (FLGSLFVGALKAIAPILVFIL), 82-102 (IVVLYLLGTFAAALTAVILSM), 141-161 (ALMTGNYIGILAWGVGLGLAL), 192-212 (IGIFGLVAATFAETGFAAIAG), 216-236 (LLAVLLGAMAFIALIINPLIV), 290-310 (IPLGATINMGGAAITITVLTL), 316-336 (LGIQVDLLTALLLSVVAAISA), and 363-383 (VAMQVVAVGFIIGVIQDAAET).

It belongs to the dicarboxylate/amino acid:cation symporter (DAACS) (TC 2.A.23) family.

Its subcellular location is the cell inner membrane. The catalysed reaction is L-serine(in) + Na(+)(in) = L-serine(out) + Na(+)(out). It carries out the reaction L-threonine(in) + Na(+)(in) = L-threonine(out) + Na(+)(out). Functionally, involved in the import of serine and threonine into the cell, with the concomitant import of sodium (symport system). The polypeptide is Serine/threonine transporter SstT (Shewanella oneidensis (strain ATCC 700550 / JCM 31522 / CIP 106686 / LMG 19005 / NCIMB 14063 / MR-1)).